The primary structure comprises 1133 residues: DNA-directed RNA polymerase subunit beta (1133 aa).

Positions 1085–1133 (ADVSSRHTPSRPTYESVTSEDLSPAAGGTFTLARRSREEDEDREEEDDF) are disordered. A compositionally biased stretch (polar residues) spans 1090-1105 (RHTPSRPTYESVTSED). Over residues 1123 to 1133 (EDEDREEEDDF) the composition is skewed to acidic residues.

The protein belongs to the RNA polymerase beta chain family. In terms of assembly, in cyanobacteria the RNAP catalytic core is composed of 2 alpha, 1 beta, 1 beta', 1 gamma and 1 omega subunit. When a sigma factor is associated with the core the holoenzyme is formed, which can initiate transcription.

The catalysed reaction is RNA(n) + a ribonucleoside 5'-triphosphate = RNA(n+1) + diphosphate. Functionally, DNA-dependent RNA polymerase catalyzes the transcription of DNA into RNA using the four ribonucleoside triphosphates as substrates. In Synechococcus sp. (strain JA-3-3Ab) (Cyanobacteria bacterium Yellowstone A-Prime), this protein is DNA-directed RNA polymerase subunit beta.